A 256-amino-acid polypeptide reads, in one-letter code: Non-homologous end joining protein Ku 2 (256 aa).

One can recognise a Ku domain in the interval 13–184 (FADTDVAVKL…SLELQESPVS (172 aa)).

The protein belongs to the prokaryotic Ku family. Homodimer. Interacts with LigD.

Its function is as follows. With LigD forms a non-homologous end joining (NHEJ) DNA repair enzyme, which repairs dsDNA breaks with reduced fidelity. Binds linear dsDNA with 5'- and 3'- overhangs but not closed circular dsDNA nor ssDNA. Recruits and stimulates the ligase activity of LigD. The sequence is that of Non-homologous end joining protein Ku 2 from Geotalea uraniireducens (strain Rf4) (Geobacter uraniireducens).